Here is a 273-residue protein sequence, read N- to C-terminus: Hydroxyethylthiazole kinase (273 aa).

Met47 contributes to the substrate binding site. ATP-binding residues include Arg123 and Thr169. Substrate is bound at residue Gly196.

This sequence belongs to the Thz kinase family. Mg(2+) serves as cofactor.

The enzyme catalyses 5-(2-hydroxyethyl)-4-methylthiazole + ATP = 4-methyl-5-(2-phosphooxyethyl)-thiazole + ADP + H(+). The protein operates within cofactor biosynthesis; thiamine diphosphate biosynthesis; 4-methyl-5-(2-phosphoethyl)-thiazole from 5-(2-hydroxyethyl)-4-methylthiazole: step 1/1. Its function is as follows. Catalyzes the phosphorylation of the hydroxyl group of 4-methyl-5-beta-hydroxyethylthiazole (THZ). In Desulfotalea psychrophila (strain LSv54 / DSM 12343), this protein is Hydroxyethylthiazole kinase.